A 59-amino-acid polypeptide reads, in one-letter code: Conotoxin Bu1.2 (59 aa).

Residues 1–16 form the signal peptide; it reads MFTVFLLVVLATTVVS. The propeptide occupies 17–42; the sequence is FSTDDESDGSNEEPSADQAARSAMNR. Residues 18 to 43 form a disordered region; the sequence is STDDESDGSNEEPSADQAARSAMNRP. Residues 19-31 show a composition bias toward acidic residues; sequence TDDESDGSNEEPS. Disulfide bonds link cysteine 46–cysteine 52 and cysteine 47–cysteine 57. Glycine 58 carries the post-translational modification Glycine amide.

This sequence belongs to the conotoxin A superfamily. As to expression, expressed by the venom duct.

It is found in the secreted. This is Conotoxin Bu1.2 from Conus bullatus (Bubble cone).